Here is a 327-residue protein sequence, read N- to C-terminus: uncharacterized protein (327 aa).

2 disordered regions span residues 127 to 170 (LSEF…GIYR) and 298 to 327 (NFED…LKRR). Residues Ser-153, Ser-154, and Ser-309 each carry the phosphoserine modification. The segment covering 317–327 (YRKRKKNLKRR) has biased composition (basic residues).

This is an uncharacterized protein from Schizosaccharomyces pombe (strain 972 / ATCC 24843) (Fission yeast).